The following is a 159-amino-acid chain: UPF0262 protein CCNA_02430 (159 aa).

It belongs to the UPF0262 family.

The chain is UPF0262 protein CCNA_02430 from Caulobacter vibrioides (strain NA1000 / CB15N) (Caulobacter crescentus).